A 274-amino-acid chain; its full sequence is Large ribosomal subunit protein uL2cz/uL2cy (274 aa).

The tract at residues asparagine 224–lysine 274 is disordered.

Belongs to the universal ribosomal protein uL2 family. Part of the 50S ribosomal subunit.

It is found in the plastid. Its subcellular location is the chloroplast. The chain is Large ribosomal subunit protein uL2cz/uL2cy (rpl2-A) from Morus indica (Mulberry).